We begin with the raw amino-acid sequence, 313 residues long: Porphobilinogen deaminase (313 aa).

Cys242 is modified (S-(dipyrrolylmethanemethyl)cysteine).

The protein belongs to the HMBS family. As to quaternary structure, monomer. Dipyrromethane is required as a cofactor.

The enzyme catalyses 4 porphobilinogen + H2O = hydroxymethylbilane + 4 NH4(+). It participates in porphyrin-containing compound metabolism; protoporphyrin-IX biosynthesis; coproporphyrinogen-III from 5-aminolevulinate: step 2/4. Tetrapolymerization of the monopyrrole PBG into the hydroxymethylbilane pre-uroporphyrinogen in several discrete steps. This is Porphobilinogen deaminase from Escherichia fergusonii (strain ATCC 35469 / DSM 13698 / CCUG 18766 / IAM 14443 / JCM 21226 / LMG 7866 / NBRC 102419 / NCTC 12128 / CDC 0568-73).